The primary structure comprises 220 residues: Vesicle-associated membrane protein 7 (220 aa).

Ala-2 carries the N-acetylalanine modification. The Cytoplasmic segment spans residues 2–188 (AILFAVVARG…ARAMCVKNVK (187 aa)). Residues 7 to 110 (VVARGTTILA…AMNSEFSSVL (104 aa)) enclose the Longin domain. One can recognise a v-SNARE coiled-coil homology domain in the interval 125–185 (RVTETQAQVD…RNLARAMCVK (61 aa)). 2 positions are modified to phosphoserine: Ser-167 and Ser-168. The chain crosses the membrane as a helical; Anchor for type IV membrane protein span at residues 189–209 (LTAIIVVVSIVFIYIIVSPLC). The Vesicular segment spans residues 210–220 (GGFTWPSCVKK).

It belongs to the synaptobrevin family. As to quaternary structure, may interact with STX17. Component of the SNARE complex composed of STX4, SNAP23 and VAMP7 that binds SYT7 during lysosomal exocytosis. Component of the SNARE complex composed of STX7, STX8, VAMP7 and VTI1B that is required for heterotypic fusion of late endosomes with lysosomes. Interacts with PICALM. Interacts with RAB21. Expressed in brain, kidney, liver, lung, spleen and thymus. Not expressed in heart and skeletal muscle.

It is found in the cytoplasmic vesicle. The protein resides in the secretory vesicle membrane. Its subcellular location is the golgi apparatus. It localises to the trans-Golgi network membrane. The protein localises to the late endosome membrane. It is found in the lysosome membrane. The protein resides in the endoplasmic reticulum membrane. Its subcellular location is the phagosome membrane. It localises to the synapse. The protein localises to the synaptosome. Involved in the targeting and/or fusion of transport vesicles to their target membrane during transport of proteins from the early endosome to the lysosome. Required for heterotypic fusion of late endosomes with lysosomes and homotypic lysosomal fusion. Required for calcium regulated lysosomal exocytosis. Involved in the export of chylomicrons from the endoplasmic reticulum to the cis Golgi. Required for exocytosis of mediators during eosinophil and neutrophil degranulation, and target cell killing by natural killer cells. Required for focal exocytosis of late endocytic vesicles during phagosome formation. This Rattus norvegicus (Rat) protein is Vesicle-associated membrane protein 7 (Vamp7).